An 816-amino-acid chain; its full sequence is Glycerol-3-phosphate acyltransferase (816 aa).

The HXXXXD motif motif lies at 298 to 303; the sequence is CHRSHM.

Belongs to the GPAT/DAPAT family.

The protein localises to the cell membrane. The enzyme catalyses sn-glycerol 3-phosphate + an acyl-CoA = a 1-acyl-sn-glycero-3-phosphate + CoA. Its pathway is phospholipid metabolism; CDP-diacylglycerol biosynthesis; CDP-diacylglycerol from sn-glycerol 3-phosphate: step 1/3. The sequence is that of Glycerol-3-phosphate acyltransferase from Hamiltonella defensa subsp. Acyrthosiphon pisum (strain 5AT).